A 179-amino-acid chain; its full sequence is ADP-ribose 1''-phosphate phosphatase (179 aa).

Residues 1-179 enclose the Macro domain; it reads MSNIHYIKGN…RSMNFTVYEL (179 aa). Substrate-binding positions include 9–11, 24–26, 31–36, and 149–155; these read GNI, SCN, WGGGIA, and INSGIFG.

The protein belongs to the POA1 family.

It catalyses the reaction ADP-alpha-D-ribose 1''-phosphate + H2O = ADP-D-ribose + phosphate. Highly specific phosphatase involved in the metabolism of ADP-ribose 1''-phosphate (Appr1p) which is produced as a consequence of tRNA splicing. The sequence is that of ADP-ribose 1''-phosphate phosphatase (POA1) from Candida glabrata (strain ATCC 2001 / BCRC 20586 / JCM 3761 / NBRC 0622 / NRRL Y-65 / CBS 138) (Yeast).